The sequence spans 197 residues: Imidazoleglycerol-phosphate dehydratase (197 aa).

This sequence belongs to the imidazoleglycerol-phosphate dehydratase family.

Its subcellular location is the cytoplasm. The enzyme catalyses D-erythro-1-(imidazol-4-yl)glycerol 3-phosphate = 3-(imidazol-4-yl)-2-oxopropyl phosphate + H2O. The protein operates within amino-acid biosynthesis; L-histidine biosynthesis; L-histidine from 5-phospho-alpha-D-ribose 1-diphosphate: step 6/9. The sequence is that of Imidazoleglycerol-phosphate dehydratase from Thermobifida fusca (strain YX).